The following is a 263-amino-acid chain: Putative TATA-binding protein pB263R (263 aa).

Belongs to the asfivirus B263R family.

Functionally, putative TATA-binding protein. This chain is Putative TATA-binding protein pB263R, found in Ornithodoros (relapsing fever ticks).